A 250-amino-acid chain; its full sequence is 2,3-bisphosphoglycerate-dependent phosphoglycerate mutase (250 aa).

Substrate contacts are provided by residues R10 to N17, T23 to G24, R62, E89 to Y92, K100, R116 to R117, and G185 to N186. The active-site Tele-phosphohistidine intermediate is the H11. E89 functions as the Proton donor/acceptor in the catalytic mechanism.

This sequence belongs to the phosphoglycerate mutase family. BPG-dependent PGAM subfamily. As to quaternary structure, homodimer.

The enzyme catalyses (2R)-2-phosphoglycerate = (2R)-3-phosphoglycerate. The protein operates within carbohydrate degradation; glycolysis; pyruvate from D-glyceraldehyde 3-phosphate: step 3/5. Functionally, catalyzes the interconversion of 2-phosphoglycerate and 3-phosphoglycerate. This is 2,3-bisphosphoglycerate-dependent phosphoglycerate mutase from Erwinia tasmaniensis (strain DSM 17950 / CFBP 7177 / CIP 109463 / NCPPB 4357 / Et1/99).